Reading from the N-terminus, the 1131-residue chain is ATP-dependent helicase FUN30 (1131 aa).

The tract at residues 1 to 70 (MSGSHSNDED…HTSKPLPSGS (70 aa)) is disordered. The span at 16-36 (PETSSPTKVASSSPLKPTSPT) shows a compositional bias: polar residues. Residues 76–111 (VNLAREFPDFSQTLVQAVFKSNSFNLQSARERLTRL) form a CUE-like region region. The tract at residues 114 to 141 (QRQNWTWNKNASPKKSETPPPVKKSLPL) is disordered. Phosphoserine is present on Ser-232. Disordered regions lie at residues 242-273 (KYGRHANDNDEEEEESMMTDDDDASGDDYTES) and 327-350 (NDKDTEENASNKRKRRAAASANES). Acidic residues predominate over residues 250-271 (NDEEEEESMMTDDDDASGDDYT). At Ser-369 the chain carries Phosphoserine. Positions 400 to 533 (DLMNLGEDDD…GDDDDDDDDE (134 aa)) are disordered. Residues 405–416 (GEDDDDDNDDGN) show a composition bias toward acidic residues. The span at 417-432 (NDNNNSNNNNTAGADA) shows a compositional bias: low complexity. The segment covering 433-442 (TSKEKEDTKA) has biased composition (basic and acidic residues). Ser-451 carries the phosphoserine modification. Residues 480-533 (EDEDDDVDLEAIDDELPQSEHEDDDYEEEDEDYNDEEEDVEYDDGDDDDDDDDE) show a composition bias toward acidic residues. The 169-residue stretch at 584 to 752 (NLLYQNKMSC…MSLLEFIMPN (169 aa)) folds into the Helicase ATP-binding domain. 597-604 (DDMGLGKT) contacts ATP. The short motif at 703–706 (DEGH) is the DEGH box element. The region spanning 953-1108 (ALKKLLKTII…EDKKSQDVLE (156 aa)) is the Helicase C-terminal domain.

The protein belongs to the SNF2/RAD54 helicase family. Homodimer.

It localises to the nucleus. The protein resides in the chromosome. It carries out the reaction ATP + H2O = ADP + phosphate + H(+). In terms of biological role, DNA helicase that possesses intrinsic ATP-dependent nucleosome-remodeling activity and is both required for DNA repair and heterochromatin organization. Promotes DNA end resection of double-strand breaks (DSBs) following DNA damage: probably acts by weakening histone DNA interactions in nucleosomes flanking DSBs, facilitating single-stranded DNA (ssDNA) production by the EXO1 and SGS1 machinery. Promotes gene silencing at heterochromatin by regulating the chromatin structure within or around silent loci. Also required for heterochromatin organization at centromeres. The sequence is that of ATP-dependent helicase FUN30 (FUN30) from Saccharomyces cerevisiae (strain ATCC 204508 / S288c) (Baker's yeast).